The sequence spans 539 residues: O-phosphoserine--tRNA(Cys) ligase (539 aa).

Residues 188–190 (HMT), 233–235 (SAS), 275–276 (YY), and Asn319 contribute to the substrate site.

This sequence belongs to the class-II aminoacyl-tRNA synthetase family. O-phosphoseryl-tRNA(Cys) synthetase subfamily. Homotetramer. Interacts with SepCysS.

It catalyses the reaction tRNA(Cys) + O-phospho-L-serine + ATP = O-phospho-L-seryl-tRNA(Cys) + AMP + diphosphate. In terms of biological role, catalyzes the attachment of O-phosphoserine (Sep) to tRNA(Cys). This chain is O-phosphoserine--tRNA(Cys) ligase (sepS), found in Methanocaldococcus jannaschii (strain ATCC 43067 / DSM 2661 / JAL-1 / JCM 10045 / NBRC 100440) (Methanococcus jannaschii).